We begin with the raw amino-acid sequence, 141 residues long: uncharacterized protein (141 aa).

The region spanning 10-117 (IFCDIVQGSI…VPKYETGKGF (108 aa)) is the HIT domain. The Histidine triad motif signature appears at 102–106 (HFHLH).

This is an uncharacterized protein from Mycoplasma genitalium (strain ATCC 33530 / DSM 19775 / NCTC 10195 / G37) (Mycoplasmoides genitalium).